Reading from the N-terminus, the 152-residue chain is FMN reductase (NADH) RutF (152 aa).

It belongs to the non-flavoprotein flavin reductase family. RutF subfamily.

The enzyme catalyses FMNH2 + NAD(+) = FMN + NADH + 2 H(+). Functionally, catalyzes the reduction of FMN to FMNH2 which is used to reduce pyrimidine by RutA via the Rut pathway. This is FMN reductase (NADH) RutF from Shigella flexneri.